Reading from the N-terminus, the 66-residue chain is Defensin-like peptide 2/4 (66 aa).

Positions Met1–Ala22 are cleaved as a signal peptide. Residues Lys23–Pro24 constitute a propeptide that is removed on maturation. The residue at position 26 (Met26) is a D-methionine; in form DLP-2. 3 disulfide bridges follow: Cys33-Cys63, Cys40-Cys56, and Cys48-Cys64.

In terms of processing, stereoinversion of L-Met-26 (in DLP-4) to D-Met-26 (in DLP-2). As to expression, produced by the crural gland and detected in venom from the spur located on each male hind leg. Is also widely expressed in both male and female tissues, including brain, intestine, kidney, lung, spleen and testis.

It is found in the secreted. Functionally, does not show antimicrobial, myotoxic, hemolytic and cell-promoting activities. This chain is Defensin-like peptide 2/4, found in Ornithorhynchus anatinus (Duckbill platypus).